The following is a 269-amino-acid chain: JmjC domain-containing protein 8 (269 aa).

Residues 1 to 24 form the signal peptide; sequence MAAAGRFGLLLLIVLWTMVTVVLP. 3 N-linked (GlcNAc...) asparagine glycosylation sites follow: Asn-135, Asn-145, and Asn-214. The region spanning 147–269 is the JmjC domain; it reads TEWAPLFQHY…TSVFISTFLG (123 aa).

As to quaternary structure, oligomer. Dimer. Interacts with PKM; regulates angiogenesis and metabolism. In terms of processing, N-glycosylated.

The protein localises to the endoplasmic reticulum lumen. It is found in the cytoplasm. In terms of biological role, functions as a positive regulator of TNF-induced NF-kappaB signaling. Regulates angiogenesis and cellular metabolism through interaction with PKM. The polypeptide is JmjC domain-containing protein 8 (Rattus norvegicus (Rat)).